Consider the following 38-residue polypeptide: Iota-conotoxin-like L11.5 (38 aa).

Intrachain disulfides connect Cys-5–Cys-19, Cys-12–Cys-24, Cys-18–Cys-29, and Cys-23–Cys-36.

This sequence belongs to the conotoxin I1 superfamily. Expressed by the venom duct.

The protein localises to the secreted. Its function is as follows. Iota-conotoxins bind to voltage-gated sodium channels (Nav) and act as agonists by shifting the voltage-dependence of activation to more hyperpolarized levels. Produces general excitatory symptoms. The protein is Iota-conotoxin-like L11.5 of Conus lynceus (Lynceus cone).